The sequence spans 151 residues: Small ribosomal subunit protein uS15 (151 aa).

It belongs to the universal ribosomal protein uS15 family.

The sequence is that of Small ribosomal subunit protein uS15 (RpS13) from Spodoptera frugiperda (Fall armyworm).